Here is a 407-residue protein sequence, read N- to C-terminus: Inhibin beta B chain (407 aa).

An N-terminal signal peptide occupies residues 1 to 28; that stretch reads MDGLPGRALGAACLLLLAAGWLGPEAWG. Residues 26–62 are disordered; that stretch reads AWGSPTPPPTPAAPPPPPPPGSPGGSQDTCTSCGGFR. Residues 29 to 292 constitute a propeptide that is removed on maturation; it reads SPTPPPTPAA…GDSRHRIRKR (264 aa). The span at 30 to 47 shows a compositional bias: pro residues; the sequence is PTPPPTPAAPPPPPPPGS. Asparagine 93 is a glycosylation site (N-linked (GlcNAc...) asparagine). 4 cysteine pairs are disulfide-bonded: cysteine 296/cysteine 304, cysteine 303/cysteine 372, cysteine 332/cysteine 404, and cysteine 336/cysteine 406.

It belongs to the TGF-beta family. In terms of assembly, dimeric, linked by one or more disulfide bonds. Inhibin B is a dimer of alpha and beta-B. Activin B is a homodimer of beta-B. Activin AB is a dimer of beta-A and beta-B. Interacts with FST and FSTL3. Activin B interacts with BMPR2.

The protein resides in the secreted. Inhibins and activins inhibit and activate, respectively, the secretion of follitropin by the pituitary gland. Inhibins/activins are involved in regulating a number of diverse functions such as hypothalamic and pituitary hormone secretion, gonadal hormone secretion, germ cell development and maturation, erythroid differentiation, insulin secretion, nerve cell survival, embryonic axial development or bone growth, depending on their subunit composition. Inhibins appear to oppose the functions of activins. Functionally, activin B is a dimer of alpha and beta-B that plays a role in several essential biological processes including embryonic development, stem cell maintenance and differentiation, haematopoiesis, cell proliferation and wound healing. Signals through type I receptor ACVR1C, abundantly expressed in pancreatic beta cells, and type II receptors like ACVR2A or BMPR2. Upon ligand binding, these receptors phosphorylate intracellular signaling mediators SMAD2 and SMAD3, which form a complex with SMAD4, translocate to the nucleus, and regulate gene expression. Plays a crucial role in the induction of hepcidin by inflammation through activation of ACVR1C and subsequent phosphorylation of SMAD1/5/8. Regulates adipocyte lipid metabolism by decreasing non-esterified fatty acids and glycerol release and increases intracellular triglyceride content. Stimulates wound healing by promoting cell migration and hair follicle regeneration through the JNK and ERK signaling pathways downstream of RHOA. Its function is as follows. Inhibin B is a dimer of alpha and beta-B that plays a crucial role in the regulation of the reproductive system by inhibiting the secretion of follicle-stimulating hormone (FSH) from the anterior pituitary gland. Thereby, maintains reproductive homeostasis in both males and females. Acts as a more potent suppressor of FSH release than inhibin A. Functions as competitive receptor antagonist binding activin type II receptors with high affinity in the presence of the TGF-beta type III coreceptor/TGFBR3L. In Homo sapiens (Human), this protein is Inhibin beta B chain (INHBB).